Here is a 318-residue protein sequence, read N- to C-terminus: MRSPLVLLDGASMWFRSFFGVPSSITAPDGRPVNAVRGFIDSMAVVITQQRPNRLAVCLDLDWRPQFRVDLIPSYKAHRVAEPEPNGQPDVEEVPDELTPQVDMIMELLDAFGIAMAGAPGFEADDVLGTLATRERRDPVIVVSGDRDLLQVVADDPVPVRVLYLGRGLAKATLFGPAEVAERYGLPAHRAGAAYAELALLRGDPSDGLPGVPGVGEKTAATLLARHGSLDQIMAAADDRKTTMAKGLRTKLLAASAYIKAADRVVRVATDAPVTLSTPTDRFPLVAADPERTAELATRFGVESSIARLQKALDTLPG.

The 5'-3' exonuclease domain maps to 194–278 (AYAELALLRG…ATDAPVTLST (85 aa)).

5'-3' exonuclease acting preferentially on double-stranded DNA. This Mycobacterium tuberculosis (strain ATCC 25618 / H37Rv) protein is 5'-3' exonuclease.